The sequence spans 38 residues: A2-specific pheromone (38 aa).

Cys35 bears the Cysteine methyl ester mark. Cys35 carries the S-farnesyl cysteine lipid modification. Residues 36 to 38 constitute a propeptide, removed in mature form; it reads LIA.

Its subcellular location is the cell membrane. Mating pheromone for A2 allele. This is A2-specific pheromone (MFA2) from Mycosarcoma maydis (Corn smut fungus).